The chain runs to 469 residues: Glutamate--tRNA ligase (469 aa).

A 'HIGH' region motif is present at residues 9-19 (PSPTGMFHVGG). The Zn(2+) site is built by Cys100, Cys102, Cys122, and Asp124. The 'KMSKS' region signature appears at 232–236 (KLSKR). Residue Lys235 coordinates ATP.

Belongs to the class-I aminoacyl-tRNA synthetase family. Glutamate--tRNA ligase type 1 subfamily. In terms of assembly, monomer. Zn(2+) serves as cofactor.

It is found in the cytoplasm. The enzyme catalyses tRNA(Glu) + L-glutamate + ATP = L-glutamyl-tRNA(Glu) + AMP + diphosphate. Catalyzes the attachment of glutamate to tRNA(Glu) in a two-step reaction: glutamate is first activated by ATP to form Glu-AMP and then transferred to the acceptor end of tRNA(Glu). The chain is Glutamate--tRNA ligase from Salinispora arenicola (strain CNS-205).